The following is a 389-amino-acid chain: uncharacterized protein (389 aa).

WD repeat units lie at residues 11-53 (SFGS…QKIK), 146-186 (SHHD…EEDA), and 289-330 (AHGD…LDIP). Serine 351 carries the post-translational modification Phosphoserine. The segment at 361–389 (QKESVSTRPRKEKHKKAKKHSMKSRFKPY) is disordered. Residues 368–389 (RPRKEKHKKAKKHSMKSRFKPY) are compositionally biased toward basic residues.

This is an uncharacterized protein from Saccharomyces cerevisiae (strain ATCC 204508 / S288c) (Baker's yeast).